Consider the following 314-residue polypeptide: Ribosomal RNA small subunit methyltransferase H (314 aa).

S-adenosyl-L-methionine contacts are provided by residues 34 to 36 (GGH), aspartate 53, phenylalanine 82, aspartate 103, and glutamine 110.

The protein belongs to the methyltransferase superfamily. RsmH family.

The protein localises to the cytoplasm. It carries out the reaction cytidine(1402) in 16S rRNA + S-adenosyl-L-methionine = N(4)-methylcytidine(1402) in 16S rRNA + S-adenosyl-L-homocysteine + H(+). Specifically methylates the N4 position of cytidine in position 1402 (C1402) of 16S rRNA. The chain is Ribosomal RNA small subunit methyltransferase H from Limosilactobacillus fermentum (strain NBRC 3956 / LMG 18251) (Lactobacillus fermentum).